Reading from the N-terminus, the 91-residue chain is Small ribosomal subunit protein uS15c (91 aa).

The protein belongs to the universal ribosomal protein uS15 family. In terms of assembly, part of the 30S ribosomal subunit.

The protein localises to the plastid. It is found in the chloroplast. The chain is Small ribosomal subunit protein uS15c (rps15) from Eucalyptus globulus subsp. globulus (Tasmanian blue gum).